The chain runs to 138 residues: MGEFQHAIDAKGRLIIPAKLREGLGERFIATKGLDRCLFVFPLAEFEAVSQKLRGLGMSSSAARAFNRLFFSGATECELDPQGRILLPANLREYAGIQKDCVIVGVENRVEIWAAERWAEYSEEAGELYTEIAEKLGF.

SpoVT-AbrB domains follow at residues 3–45 (EFQH…PLAE) and 74–117 (ATEC…AAER).

It belongs to the MraZ family. As to quaternary structure, forms oligomers.

It is found in the cytoplasm. The protein localises to the nucleoid. This Symbiobacterium thermophilum (strain DSM 24528 / JCM 14929 / IAM 14863 / T) protein is Transcriptional regulator MraZ.